Reading from the N-terminus, the 209-residue chain is Glutathione S-transferase (209 aa).

Residues 7–91 (FFFFFFFFFS…YLSKKYNISG (85 aa)) form the GST N-terminal domain. Glutathione-binding positions include 62–63 (QV), 75–76 (QS), Asp109, Lys121, and Thr125. Residues 93–209 (GELNEFYADM…YIANRKESVY (117 aa)) form the GST C-terminal domain.

It belongs to the GST superfamily. In terms of assembly, homodimer. In the absence of ligands two homodimers may interact to form a tetramer.

It carries out the reaction RX + glutathione = an S-substituted glutathione + a halide anion + H(+). Functionally, conjugation of reduced glutathione to a wide number of exogenous and endogenous hydrophobic electrophiles. May also function as a storage protein or ligandin for parasitotoxic ferriprotoporphyrin IX (hemin). In Plasmodium yoelii yoelii, this protein is Glutathione S-transferase.